The chain runs to 211 residues: Peptidyl-tRNA hydrolase (211 aa).

Residue Y15 coordinates tRNA. Catalysis depends on H20, which acts as the Proton acceptor. TRNA contacts are provided by F66, N68, and N114. The disordered stretch occupies residues 189-211; the sequence is TKPPRPKATRPAQAQAAPQAGAD. A compositionally biased stretch (low complexity) spans 197–211; the sequence is TRPAQAQAAPQAGAD.

The protein belongs to the PTH family. As to quaternary structure, monomer.

Its subcellular location is the cytoplasm. It catalyses the reaction an N-acyl-L-alpha-aminoacyl-tRNA + H2O = an N-acyl-L-amino acid + a tRNA + H(+). Functionally, hydrolyzes ribosome-free peptidyl-tRNAs (with 1 or more amino acids incorporated), which drop off the ribosome during protein synthesis, or as a result of ribosome stalling. Catalyzes the release of premature peptidyl moieties from peptidyl-tRNA molecules trapped in stalled 50S ribosomal subunits, and thus maintains levels of free tRNAs and 50S ribosomes. The protein is Peptidyl-tRNA hydrolase of Acidovorax ebreus (strain TPSY) (Diaphorobacter sp. (strain TPSY)).